Here is a 407-residue protein sequence, read N- to C-terminus: 4-hydroxy-3-methylbut-2-en-1-yl diphosphate synthase (flavodoxin) (407 aa).

[4Fe-4S] cluster contacts are provided by cysteine 296, cysteine 299, cysteine 342, and glutamate 349.

This sequence belongs to the IspG family. [4Fe-4S] cluster is required as a cofactor.

The enzyme catalyses (2E)-4-hydroxy-3-methylbut-2-enyl diphosphate + oxidized [flavodoxin] + H2O + 2 H(+) = 2-C-methyl-D-erythritol 2,4-cyclic diphosphate + reduced [flavodoxin]. It participates in isoprenoid biosynthesis; isopentenyl diphosphate biosynthesis via DXP pathway; isopentenyl diphosphate from 1-deoxy-D-xylulose 5-phosphate: step 5/6. Converts 2C-methyl-D-erythritol 2,4-cyclodiphosphate (ME-2,4cPP) into 1-hydroxy-2-methyl-2-(E)-butenyl 4-diphosphate. The chain is 4-hydroxy-3-methylbut-2-en-1-yl diphosphate synthase (flavodoxin) from Methylococcus capsulatus (strain ATCC 33009 / NCIMB 11132 / Bath).